Consider the following 599-residue polypeptide: Beta-(1--&gt;2)glucan export ATP-binding/permease protein NdvA (599 aa).

The ABC transmembrane type-1 domain occupies 21–311 (GWILAVANLL…VVNFINNVLM (291 aa)). The next 6 membrane-spanning stretches (helical) occupy residues 22–42 (WILAVANLLLATAQFAEPILF), 68–88 (LLGAWVGFGLFTIMCSALVAL), 146–166 (EHFAAILSLVVLLPLSLYINW), 168–188 (LAILLFVLCIVFTVLTTLVVH), 254–274 (VITRASTTITVLSIFALGIYL), and 276–296 (QQGLTSVGEIVMFVSFATLLI). The 235-residue stretch at 345-579 (VEFQNVSFSY…GGAFAQLARA (235 aa)) folds into the ABC transporter domain. 378–385 (GATGAGKS) is a binding site for ATP.

Belongs to the ABC transporter superfamily. Beta-(1--&gt;2)glucan exporter (TC 3.A.1.108.1) family. In terms of assembly, homodimer.

It localises to the cell inner membrane. The enzyme catalyses [(1-&gt;2)-beta-D-glucosyl](n)(in) + ATP + H2O = [(1-&gt;2)-beta-D-glucosyl](n)(out) + ADP + phosphate + H(+). In terms of biological role, involved in beta-(1--&gt;2)glucan export. Transmembrane domains (TMD) form a pore in the inner membrane and the ATP-binding domain (NBD) is responsible for energy generation. The polypeptide is Beta-(1--&gt;2)glucan export ATP-binding/permease protein NdvA (Rhodopseudomonas palustris (strain ATCC BAA-98 / CGA009)).